The sequence spans 347 residues: Protein RecA (347 aa).

67–74 (GPESSGKT) is a binding site for ATP.

This sequence belongs to the RecA family.

It is found in the cytoplasm. Its function is as follows. Can catalyze the hydrolysis of ATP in the presence of single-stranded DNA, the ATP-dependent uptake of single-stranded DNA by duplex DNA, and the ATP-dependent hybridization of homologous single-stranded DNAs. It interacts with LexA causing its activation and leading to its autocatalytic cleavage. The polypeptide is Protein RecA (Helicobacter pylori (strain P12)).